The sequence spans 151 residues: MEYQGQHGGHASSRADEHGNPAVTTGNAPTGMGAGHIQEPAREDKKTDGVLRRSGSSSSSSSSEDDGMGGRRKKGIKEKIKEKLPGGNKGNNQQQQQEHTTTTTGGAYGPQGHDTKIATGAHGGTAATTADAGGEKKGIVDKIKEKLPGQH.

The disordered stretch occupies residues 1-138 (MEYQGQHGGH…TADAGGEKKG (138 aa)). Over residues 39–51 (EPAREDKKTDGVL) the composition is skewed to basic and acidic residues. Low complexity-rich tracts occupy residues 90–105 (GNNQ…TTTG) and 117–132 (IATG…TADA).

This sequence belongs to the plant dehydrin family.

The protein is Dehydrin Rab16D (RAB16D) of Oryza sativa subsp. indica (Rice).